Consider the following 1756-residue polypeptide: Periplakin (1756 aa).

Ser14 carries the phosphoserine modification. Coiled-coil stretches lie at residues 16–125 (TVQT…KQIY) and 188–389 (KEQN…QQVV). Spectrin repeat units lie at residues 216–317 (QDYM…SHLK), 323–485 (HQFH…RTLQ), 505–612 (RQLL…EKVD), and 733–861 (EHFH…QNLE). The region spanning 399–455 (LKPIPVEALCDFEGEQGLISRGYSYTLQKNNGESWELMDSAGNKLIAPAVCFVIPPT) is the SH3 domain. Residue Ser465 is modified to Phosphoserine. 2 coiled-coil regions span residues 585–820 (LLRT…GRRS) and 886–1645 (DSGV…SVAV). A phosphoserine mark is found at Ser887, Ser949, Ser1584, and Ser1657. The interval 1557 to 1756 (ELDFLREENH…ELAVLVSGQK (200 aa)) is interacts with BFSP2 and VIM. Plectin repeat units lie at residues 1651-1685 (ENHL…WNMF) and 1700-1735 (VKGP…PAQY).

Belongs to the plakin or cytolinker family. Homodimer or a heterodimer with EVPL. Found in a complex composed of PPL (via C-terminal linker domain), BFSP1 and BFSP2 in the retinal lens. Within the complex interacts (via C-terminal linker domain) with BFSP2. Interacts with VIM. Binds to the PH domain of AKT1. Interacts with FCGR1A. May interact with PPHLN1. In terms of tissue distribution, expressed in stratified squamous epithelia and in some other epithelia.

Its subcellular location is the cell junction. The protein resides in the desmosome. The protein localises to the cytoplasm. It is found in the cytoskeleton. It localises to the cell membrane. Functionally, component of the cornified envelope of keratinocytes. May link the cornified envelope to desmosomes and intermediate filaments. May act as a localization signal in PKB/AKT-mediated signaling. The protein is Periplakin (PPL) of Homo sapiens (Human).